A 173-amino-acid chain; its full sequence is RNA pyrophosphohydrolase (173 aa).

The Nudix hydrolase domain occupies 11 to 164; sequence PYRRCVGVVV…KKHVYRKVVS (154 aa). A Nudix box motif is present at residues 52–73; sequence GGIDEGEEPLDAACRELYEETG.

Belongs to the Nudix hydrolase family. RppH subfamily. A divalent metal cation is required as a cofactor.

Accelerates the degradation of transcripts by removing pyrophosphate from the 5'-end of triphosphorylated RNA, leading to a more labile monophosphorylated state that can stimulate subsequent ribonuclease cleavage. The polypeptide is RNA pyrophosphohydrolase (Bartonella quintana (strain Toulouse) (Rochalimaea quintana)).